The chain runs to 96 residues: Frd operon uncharacterized protein C (96 aa).

It belongs to the HupF/HypC family.

The sequence is that of Frd operon uncharacterized protein C from Proteus vulgaris.